Reading from the N-terminus, the 101-residue chain is Small ribosomal subunit protein uS14 (101 aa).

Belongs to the universal ribosomal protein uS14 family. Part of the 30S ribosomal subunit. Contacts proteins S3 and S10.

In terms of biological role, binds 16S rRNA, required for the assembly of 30S particles and may also be responsible for determining the conformation of the 16S rRNA at the A site. The chain is Small ribosomal subunit protein uS14 from Marinobacter nauticus (strain ATCC 700491 / DSM 11845 / VT8) (Marinobacter aquaeolei).